Consider the following 142-residue polypeptide: Large-conductance mechanosensitive channel (142 aa).

Transmembrane regions (helical) follow at residues 15–35, 38–58, and 82–102; these read AFVMRGNVVDLAVGVIIGAAF, IVTSLVNDIFMPIIGMIIGNI, and GMFIQEIVNFLIIALCVFVAI.

Belongs to the MscL family. As to quaternary structure, homopentamer.

The protein localises to the cell inner membrane. In terms of biological role, channel that opens in response to stretch forces in the membrane lipid bilayer. May participate in the regulation of osmotic pressure changes within the cell. This Fusobacterium nucleatum subsp. nucleatum (strain ATCC 25586 / DSM 15643 / BCRC 10681 / CIP 101130 / JCM 8532 / KCTC 2640 / LMG 13131 / VPI 4355) protein is Large-conductance mechanosensitive channel.